The chain runs to 972 residues: 116 kDa U5 small nuclear ribonucleoprotein component (972 aa).

Residues 1–53 (MDTDLYDEFGNYIGPELDSDDEDDELGRESKELDELEDDDDDDDMGDHDEDHP) form a disordered region. Composition is skewed to acidic residues over residues 17-26 (LDSDDEDDEL) and 34-48 (DELE…MGDH). Residues 127–409 (ELIRNVTLCG…GIHLTKEELK (283 aa)) enclose the tr-type G domain. Residues 136-143 (GHLHHGKT), 204-208 (DTPGH), and 258-261 (NKID) each bind GTP.

The protein belongs to the TRAFAC class translation factor GTPase superfamily. Classic translation factor GTPase family. EF-G/EF-2 subfamily. In terms of assembly, component of the U5 snRNP and the U4/U6-U5 tri-snRNP complex, a building block of the spliceosome. Component of the pre-catalytic, catalytic and post-catalytic spliceosome complexes. Component of the minor spliceosome, which splices U12-type introns.

It is found in the nucleus. In terms of biological role, required for pre-mRNA splicing as component of the spliceosome, including pre-catalytic, catalytic and post-catalytic spliceosomal complexes. Component of the U5 snRNP and the U4/U6-U5 tri-snRNP complex, a building block of the spliceosome. As a component of the minor spliceosome, involved in the splicing of U12-type introns in pre-mRNAs. The protein is 116 kDa U5 small nuclear ribonucleoprotein component (EFTUD2) of Gallus gallus (Chicken).